The following is a 207-amino-acid chain: Guanylate kinase (207 aa).

Residues 6 to 185 (GLLIVLSGPS…AKNRIQCIVE (180 aa)) enclose the Guanylate kinase-like domain. 13–20 (GPSGVGKG) is an ATP binding site.

This sequence belongs to the guanylate kinase family.

It localises to the cytoplasm. It catalyses the reaction GMP + ATP = GDP + ADP. Essential for recycling GMP and indirectly, cGMP. This chain is Guanylate kinase, found in Staphylococcus aureus (strain USA300).